A 319-amino-acid polypeptide reads, in one-letter code: Acetyl-coenzyme A carboxylase carboxyl transferase subunit alpha (319 aa).

The CoA carboxyltransferase C-terminal domain maps to 35 to 296; sequence DLDKEIEQLE…KDMLVKQLEE (262 aa).

This sequence belongs to the AccA family. Acetyl-CoA carboxylase is a heterohexamer composed of biotin carboxyl carrier protein (AccB), biotin carboxylase (AccC) and two subunits each of ACCase subunit alpha (AccA) and ACCase subunit beta (AccD).

It is found in the cytoplasm. It carries out the reaction N(6)-carboxybiotinyl-L-lysyl-[protein] + acetyl-CoA = N(6)-biotinyl-L-lysyl-[protein] + malonyl-CoA. It participates in lipid metabolism; malonyl-CoA biosynthesis; malonyl-CoA from acetyl-CoA: step 1/1. Functionally, component of the acetyl coenzyme A carboxylase (ACC) complex. First, biotin carboxylase catalyzes the carboxylation of biotin on its carrier protein (BCCP) and then the CO(2) group is transferred by the carboxyltransferase to acetyl-CoA to form malonyl-CoA. In Vibrio atlanticus (strain LGP32) (Vibrio splendidus (strain Mel32)), this protein is Acetyl-coenzyme A carboxylase carboxyl transferase subunit alpha.